The following is a 570-amino-acid chain: Protein NRT1/ PTR FAMILY 8.2 (570 aa).

The residue at position 99 (Thr-99) is a Phosphothreonine. The next 10 membrane-spanning stretches (helical) occupy residues Ile-100–Val-120, Ala-136–Ile-156, Phe-182–Val-202, Trp-210–Ala-230, Ile-335–Leu-355, Ile-370–Tyr-390, Ile-414–Ala-434, Ile-454–Gly-474, Ala-493–Val-513, and Tyr-537–Ala-557.

The protein belongs to the major facilitator superfamily. Proton-dependent oligopeptide transporter (POT/PTR) (TC 2.A.17) family. Expressed in developing and germinating pollen grains and ovules.

It is found in the cell membrane. Peptide transporter. Mediates the transport of di- and tripeptides. High affinity transporter. Involved in the uptake of peptides during pollen germination and tube growth. This is Protein NRT1/ PTR FAMILY 8.2 (NPF8.2) from Arabidopsis thaliana (Mouse-ear cress).